The following is a 468-amino-acid chain: Chitoporin (468 aa).

The first 32 residues, 1 to 32 (MRTFSGKRSTLALAIAGVTAMSGFMAMPEARA), serve as a signal peptide directing secretion.

The protein belongs to the outer membrane porin (Opr) (TC 1.B.25) family.

Its subcellular location is the cell outer membrane. Functionally, involved in the uptake of chitosugars. The protein is Chitoporin (chiP) of Escherichia coli (strain K12).